Consider the following 467-residue polypeptide: MEQNVGYVVQIIGPVVDVRFESGNLPAINNAIEIHFDGKTLVAEVAQHLGNDTVRCVALGSTDGLRRGVKAIDTGGPIKVPVGRGTLGRIFNVLGQPIDNKGEVQATDYWPIHRSAPSFEEQVPAVEIFETGIKVIDLLAPYAKGGKIGLFGGAGVGKTVLIMELIRNIATEHGGFSIFTGVGERTREGNDLWLEMNESGVIEKTVLVFGQMNEPPGARMRVALTGLTMAEYFRDVEGQDVLLFIDNIFRFIQAGSEVSALLGRIPSAVGYQPTLANEVGALQERITSTKRGSITSVQAIYVPADDLTDPAPATTFAHLDATTVLSRQIAELGIYPAVDPLDSTSRILDPRIVGEEHYYVARTVQQILQRYKELQDIIAILGMDELSEEDKLIVYRARKIQRFLSQPFFVAEAFTGRPGRYVKLKDTIRGFKEIIEGKMDHIPEQYFYMVGTIDEVYENYEKDMKGK.

152 to 159 (GGAGVGKT) provides a ligand contact to ATP.

The protein belongs to the ATPase alpha/beta chains family. In terms of assembly, F-type ATPases have 2 components, CF(1) - the catalytic core - and CF(0) - the membrane proton channel. CF(1) has five subunits: alpha(3), beta(3), gamma(1), delta(1), epsilon(1). CF(0) has three main subunits: a(1), b(2) and c(9-12). The alpha and beta chains form an alternating ring which encloses part of the gamma chain. CF(1) is attached to CF(0) by a central stalk formed by the gamma and epsilon chains, while a peripheral stalk is formed by the delta and b chains.

It is found in the cell membrane. The enzyme catalyses ATP + H2O + 4 H(+)(in) = ADP + phosphate + 5 H(+)(out). Produces ATP from ADP in the presence of a proton gradient across the membrane. The catalytic sites are hosted primarily by the beta subunits. The sequence is that of ATP synthase subunit beta from Caldicellulosiruptor saccharolyticus (strain ATCC 43494 / DSM 8903 / Tp8T 6331).